A 114-amino-acid chain; its full sequence is FK506-binding protein 1 (114 aa).

One can recognise a PPIase FKBP-type domain in the interval 26–114 (GDLVTIHYTG…IFDVELLKVN (89 aa)).

It belongs to the FKBP-type PPIase family. FKBP1 subfamily.

Its subcellular location is the cytoplasm. It catalyses the reaction [protein]-peptidylproline (omega=180) = [protein]-peptidylproline (omega=0). With respect to regulation, inhibited by both FK506 and rapamycin. Functionally, PPIases accelerate the folding of proteins. It catalyzes the cis-trans isomerization of proline imidic peptide bonds in oligopeptides. This is FK506-binding protein 1 (FPR1) from Candida glabrata (strain ATCC 2001 / BCRC 20586 / JCM 3761 / NBRC 0622 / NRRL Y-65 / CBS 138) (Yeast).